Here is a 726-residue protein sequence, read N- to C-terminus: E3 SUMO-protein ligase SIZ2 (726 aa).

In terms of domain architecture, SAP spans 43–77 (MEQLKVLELKQICKSLDLSITGKKAVLQDRIKQFL). The PINIT domain maps to 139-291 (TALPPYSQQQ…SISCFIVEVF (153 aa)). The segment at 323–408 (DDDDIITTST…IQNCNEDVEQ (86 aa)) adopts an SP-RING-type zinc-finger fold. Residues C354, H356, C377, and C380 each contribute to the Zn(2+) site. Residues 507–533 (PSESEGSSDYNPNHTSTPKGSPTMDQD) form a disordered region. Positions 510–533 (SEGSSDYNPNHTSTPKGSPTMDQD) are enriched in polar residues.

Belongs to the PIAS family. As to quaternary structure, interacts with CDC12. Autosumoylated upon ethanol stress.

The protein localises to the nucleus. Its pathway is protein modification; protein sumoylation. Functionally, may act as an E3 ligase mediating SUMO/Smt3 attachment to septins. May be involved in chromosome maintenance. In Saccharomyces cerevisiae (strain ATCC 204508 / S288c) (Baker's yeast), this protein is E3 SUMO-protein ligase SIZ2 (NFI1).